An 817-amino-acid polypeptide reads, in one-letter code: Coiled-coil domain-containing protein 175 (817 aa).

Coiled-coil stretches lie at residues 130–166 (ILEI…ALGI) and 217–594 (LQDA…KQEE). The interval 761-817 (EEESPSSLSKEDLQKAGMKQKEEKTLRFSPSLHTRRDTLSRNCKMIKKRSRSPKNKP) is disordered. Basic and acidic residues predominate over residues 769 to 786 (SKEDLQKAGMKQKEEKTL). Positions 804-817 (KMIKKRSRSPKNKP) are enriched in basic residues.

The sequence is that of Coiled-coil domain-containing protein 175 (Ccdc175) from Rattus norvegicus (Rat).